A 103-amino-acid chain; its full sequence is Large ribosomal subunit protein bL21 (103 aa).

It belongs to the bacterial ribosomal protein bL21 family. Part of the 50S ribosomal subunit. Contacts protein L20.

In terms of biological role, this protein binds to 23S rRNA in the presence of protein L20. The protein is Large ribosomal subunit protein bL21 of Borreliella afzelii (strain PKo) (Borrelia afzelii).